The following is a 320-amino-acid chain: Putative cyclin-D7-1 (320 aa).

The tract at residues 1-46 (MDDDDDTSFNNSLDLYCDEDPFDSTPPPPPPPPEQQQQAGTTTPDD) is disordered. A compositionally biased stretch (pro residues) spans 24–34 (STPPPPPPPPE). Positions 35–44 (QQQQAGTTTP) are enriched in low complexity.

Belongs to the cyclin family. Cyclin D subfamily.

This Oryza sativa subsp. japonica (Rice) protein is Putative cyclin-D7-1 (CYCD7-1).